Consider the following 441-residue polypeptide: Cytochrome P450 monooxygenase cpsC (441 aa).

The disordered stretch occupies residues 175–195 (STTSQARKDETTATQQAGMEQ). A compositionally biased stretch (polar residues) spans 186–195 (TATQQAGMEQ). C377 serves as a coordination point for heme.

This sequence belongs to the cytochrome P450 family. It depends on heme as a cofactor.

The catalysed reaction is campesine D + reduced [NADPH--hemoprotein reductase] + O2 = campesine G + oxidized [NADPH--hemoprotein reductase] + 2 H2O + H(+). The protein operates within alkaloid biosynthesis. Its function is as follows. Cytochrome P450 monooxygenase; part of the gene cluster that mediates the biosynthesis of campesine G, a dimeric indole piperazine alkaloid that shows good insecticidal activity Galleria mellonella. Within the pathway, cpsC catalyzes regioselective dehydrogenation reaction towards C2-N1 of the (2H)-indole ring of campesine D to yield the final product, campesine G. The non-canonical non-ribosomal peptide synthetase cpsA catalyzes the first steps of the pathway by producing L-tryptophanal and L-valinal from their respective amino-acids. These products condensate spontaneously to form trypyl-valyl pyrazine also known as didehydrocampesine A. The NmrA-like family domain-containing oxidoreductase cpsB is the next enzyme in cps pathway and reduces the unstable didehydrocampesine A to campesine A. The methyltransferase cpsF and the acetyltransferase cpsE both recognize N13 of piperazine ring to carry out methylation and acetylation of campesine A to produce campesine C and B, respectively. The cytochrome P450 monooxygenase cpsD then acts as a dimerase that catalyzes oxidative heterocoupling between campesine B and C to produce heterodimers with unexpected 6/5/6/6/6/6/5/6 eight-ring scaffold called campesine D. Finally,the cytochrome P450 monooxygenase cpsC is a regioselective dehydrogenase that catalyzes dehydrogenation reaction towards C2-N1 to produce campesine G. This Aspergillus campestris (strain IBT 28561) protein is Cytochrome P450 monooxygenase cpsC.